Consider the following 184-residue polypeptide: Gremlin-1 (184 aa).

Residues 1-24 (MSRTAYTVGALLLLLGTLLPAAEG) form the signal peptide. Residues 24 to 77 (GKKKGSQGAIPPPDKAQHNDSEQTQSPQQPGSRNRGRGQGRGTAMPGEEVLESS) are disordered. Asparagine 42 carries N-linked (GlcNAc...) asparagine glycosylation. Cystine bridges form between cysteine 94–cysteine 144, cysteine 108–cysteine 158, cysteine 118–cysteine 176, and cysteine 122–cysteine 178. A CTCK domain is found at 94–184 (CKTQPLKQTI…QCRCISIDLD (91 aa)).

This sequence belongs to the DAN family. As to quaternary structure, homodimer; can also form homooligomers. Interacts with BMP2; can form higher oligomers with BMP2. Interacts with SLIT1 and SLIT2 in a glycosylation-dependent manner. Highly expressed in small intestine, fetal brain and colon. Expression is restricted to intestinal subepithelial myofibroblasts (ISEMFs) at the crypt base. In subjects with HMPS1, by contrast, GREM1 is expressed, not only in basal ISEMFs, but also at very high levels in epithelial cells (predominantly colonocytes), with expression extending most of the way up the sides of the crypt. Weakly expressed in brain, ovary, prostate, pancreas and skeletal muscle. In brain found in the region localized around the internal capsule in the large subcortical nuclei, including caudate, putamen, substantia nigra, thalamus and subthalamus. Predominantly expressed in normal cells including neurons, astrocytes and fibroblasts.

It is found in the secreted. In terms of biological role, cytokine that may play an important role during carcinogenesis and metanephric kidney organogenesis, as a BMP antagonist required for early limb outgrowth and patterning in maintaining the FGF4-SHH feedback loop. Down-regulates the BMP4 signaling in a dose-dependent manner. Antagonist of BMP2; inhibits BMP2-mediated differentiation of osteoblasts (in vitro). Acts as inhibitor of monocyte chemotaxis. Can inhibit the growth or viability of normal cells but not transformed cells when is overexpressed. The chain is Gremlin-1 (GREM1) from Homo sapiens (Human).